Consider the following 72-residue polypeptide: UPF0150 protein jhp_0960 (72 aa).

The protein belongs to the UPF0150 family.

This chain is UPF0150 protein jhp_0960, found in Helicobacter pylori (strain J99 / ATCC 700824) (Campylobacter pylori J99).